Consider the following 90-residue polypeptide: UPF0223 protein SH1855 (90 aa).

Belongs to the UPF0223 family.

The chain is UPF0223 protein SH1855 from Staphylococcus haemolyticus (strain JCSC1435).